The following is an 84-amino-acid chain: Small ribosomal subunit protein bS18 (84 aa).

The protein belongs to the bacterial ribosomal protein bS18 family. As to quaternary structure, part of the 30S ribosomal subunit. Forms a tight heterodimer with protein bS6.

Functionally, binds as a heterodimer with protein bS6 to the central domain of the 16S rRNA, where it helps stabilize the platform of the 30S subunit. In Mycoplasma mobile (strain ATCC 43663 / 163K / NCTC 11711) (Mesomycoplasma mobile), this protein is Small ribosomal subunit protein bS18.